The following is a 104-amino-acid chain: Phycoerythrin alpha-2 chain, chloroplastic (104 aa).

Residues 1-37 (MSAKIIAFSAVVATASAFAPTAGFVPRLRSGATSVNM) constitute a chloroplast transit peptide. Position 41 is a 5-hydroxylysine (lysine 41). Residues cysteine 56 and arginine 58 each coordinate 15,16-dihydrobiliverdin. The interval 61 to 63 (KEY) is 15,16-dihydrobiliverdin chromophore. Lysine 78 serves as a coordination point for 15,16-dihydrobiliverdin.

The protein belongs to the phycoerythrin family. Heterotetramer of 2 different alpha chains and 2 identical beta chains. The subunit composition could comprise of any combination of 2 out of 4 different alpha units with an invariant beta unit. Post-translationally, contains one covalently linked 15,16-dihydrobiliverdin chromophore.

The protein resides in the plastid. The protein localises to the chloroplast thylakoid membrane. Its function is as follows. Light-harvesting photosynthetic tetrapyrrole chromophore-protein from the phycobiliprotein complex. The polypeptide is Phycoerythrin alpha-2 chain, chloroplastic (cpeA2) (Rhodomonas sp. (strain CS 24) (Chroomonas sp. (strain CS24))).